Here is a 265-residue protein sequence, read N- to C-terminus: 3-methyl-2-oxobutanoate hydroxymethyltransferase (265 aa).

Mg(2+)-binding residues include D46 and D85. Residues 46-47 (DS), D85, and K114 each bind 3-methyl-2-oxobutanoate. E116 contributes to the Mg(2+) binding site. E183 functions as the Proton acceptor in the catalytic mechanism.

The protein belongs to the PanB family. Homodecamer; pentamer of dimers. Requires Mg(2+) as cofactor.

The protein localises to the cytoplasm. It catalyses the reaction 3-methyl-2-oxobutanoate + (6R)-5,10-methylene-5,6,7,8-tetrahydrofolate + H2O = 2-dehydropantoate + (6S)-5,6,7,8-tetrahydrofolate. It functions in the pathway cofactor biosynthesis; coenzyme A biosynthesis. Catalyzes the reversible reaction in which hydroxymethyl group from 5,10-methylenetetrahydrofolate is transferred onto alpha-ketoisovalerate to form ketopantoate. This is 3-methyl-2-oxobutanoate hydroxymethyltransferase from Pyrobaculum calidifontis (strain DSM 21063 / JCM 11548 / VA1).